Consider the following 528-residue polypeptide: MGNCCRSPAAVAREDVKSNYSGHDHARKDAAGGKKSAPIRVLSDVPKENIEDRYLLDRELGRGEFGVTYLCIERSSRDLLACKSISKRKLRTAVDIEDVKREVAIMKHLPKSSSIVTLKEACEDDNAVHLVMELCEGGELFDRIVARGHYTERAAAGVTKTIVEVVQLCHKHGVIHRDLKPENFLFANKKENSPLKAIDFGLSIFFKPGEKFSEIVGSPYYMAPEVLKRNYGPEIDIWSAGVILYILLCGVPPFWAESEQGVAQAILRGVIDFKREPWPNISETAKNLVRQMLEPDPKRRLTAKQVLEHPWIQNAKKAPNVPLGDVVKSRLKQFSVMNRFKRKALRVIAEFLSTEEVEDIKVMFNKMDTDNDGIVSIEELKAGLRDFSTQLAESEVQMLIEAVDTKGKGTLDYGEFVAVSLHLQKVANDEHLRKAFSYFDKDGNGYILPQELCDALKEDGGDDCVDVANDIFQEVDTDKDGRISYEEFAAMMKTGTDWRKASRHYSRGRFNSLSIKLMKDGSLNLGNE.

Residue Gly2 is the site of N-myristoyl glycine attachment. Positions 17-32 are enriched in basic and acidic residues; it reads KSNYSGHDHARKDAAG. The disordered stretch occupies residues 17–37; sequence KSNYSGHDHARKDAAGGKKSA. The residue at position 43 (Ser43) is a Phosphoserine. One can recognise a Protein kinase domain in the interval 54–312; that stretch reads YLLDRELGRG…AKQVLEHPWI (259 aa). ATP-binding positions include 60–68 and Lys83; that span reads LGRGEFGVT. Asp178 functions as the Proton acceptor in the catalytic mechanism. Ser218 bears the Phosphoserine mark. Positions 318-348 are autoinhibitory domain; it reads APNVPLGDVVKSRLKQFSVMNRFKRKALRVI. EF-hand domains lie at 355–390, 391–426, 427–462, and 463–498; these read EEVEDIKVMFNKMDTDNDGIVSIEELKAGLRDFSTQ, LAESEVQMLIEAVDTKGKGTLDYGEFVAVSLHLQKV, ANDEHLRKAFSYFDKDGNGYILPQELCDALKEDGGD, and DCVDVANDIFQEVDTDKDGRISYEEFAAMMKTGTDW. Residues Asp368, Asp370, Asp372, Glu379, Asp404, Thr410, Glu415, Asp440, Asp442, Asn444, Tyr446, Glu451, Asp476, Asp478, Asp480, and Arg482 each contribute to the Ca(2+) site. Position 484 is a phosphoserine (Ser484). Residue Glu487 participates in Ca(2+) binding. Ser522 is subject to Phosphoserine.

This sequence belongs to the protein kinase superfamily. Ser/Thr protein kinase family. CDPK subfamily.

Its subcellular location is the cell membrane. The catalysed reaction is L-seryl-[protein] + ATP = O-phospho-L-seryl-[protein] + ADP + H(+). It carries out the reaction L-threonyl-[protein] + ATP = O-phospho-L-threonyl-[protein] + ADP + H(+). With respect to regulation, activated by calcium. Autophosphorylation may play an important role in the regulation of the kinase activity. May play a role in signal transduction pathways that involve calcium as a second messenger. This chain is Calcium-dependent protein kinase 13 (CPK13), found in Arabidopsis thaliana (Mouse-ear cress).